The primary structure comprises 252 residues: Indole-3-glycerol phosphate synthase (252 aa).

This sequence belongs to the TrpC family.

It carries out the reaction 1-(2-carboxyphenylamino)-1-deoxy-D-ribulose 5-phosphate + H(+) = (1S,2R)-1-C-(indol-3-yl)glycerol 3-phosphate + CO2 + H2O. It functions in the pathway amino-acid biosynthesis; L-tryptophan biosynthesis; L-tryptophan from chorismate: step 4/5. This Listeria welshimeri serovar 6b (strain ATCC 35897 / DSM 20650 / CCUG 15529 / CIP 8149 / NCTC 11857 / SLCC 5334 / V8) protein is Indole-3-glycerol phosphate synthase.